Reading from the N-terminus, the 504-residue chain is Glutamate--tRNA ligase (504 aa).

The short motif at 25–35 (PSPTGNPHVGL) is the 'HIGH' region element. Residues Cys122, Cys124, Cys149, and Asp151 each coordinate Zn(2+). Residues 270-274 (KLSKR) carry the 'KMSKS' region motif. Lys273 is an ATP binding site.

This sequence belongs to the class-I aminoacyl-tRNA synthetase family. Glutamate--tRNA ligase type 1 subfamily. As to quaternary structure, monomer. Zn(2+) is required as a cofactor.

The protein resides in the cytoplasm. It catalyses the reaction tRNA(Glu) + L-glutamate + ATP = L-glutamyl-tRNA(Glu) + AMP + diphosphate. Its function is as follows. Catalyzes the attachment of glutamate to tRNA(Glu) in a two-step reaction: glutamate is first activated by ATP to form Glu-AMP and then transferred to the acceptor end of tRNA(Glu). This Streptomyces griseus subsp. griseus (strain JCM 4626 / CBS 651.72 / NBRC 13350 / KCC S-0626 / ISP 5235) protein is Glutamate--tRNA ligase.